The primary structure comprises 154 residues: MPKGEGKLIAQNRKARHDYSIIDTVEAGLVLQGTEIKSIRNGRINLKDGFARIRNGEAFLYNVHISPYEQGNIFNHDPLRTRKLLLHKKQINKLIGETKNTGITLVPLKVYIKDGYAKVLIGLAKGKKQYDKREDLKRKEVDRQISRTLKNNRR.

Belongs to the SmpB family.

The protein resides in the cytoplasm. Required for rescue of stalled ribosomes mediated by trans-translation. Binds to transfer-messenger RNA (tmRNA), required for stable association of tmRNA with ribosomes. tmRNA and SmpB together mimic tRNA shape, replacing the anticodon stem-loop with SmpB. tmRNA is encoded by the ssrA gene; the 2 termini fold to resemble tRNA(Ala) and it encodes a 'tag peptide', a short internal open reading frame. During trans-translation Ala-aminoacylated tmRNA acts like a tRNA, entering the A-site of stalled ribosomes, displacing the stalled mRNA. The ribosome then switches to translate the ORF on the tmRNA; the nascent peptide is terminated with the 'tag peptide' encoded by the tmRNA and targeted for degradation. The ribosome is freed to recommence translation, which seems to be the essential function of trans-translation. This is SsrA-binding protein from Enterococcus faecalis (strain ATCC 700802 / V583).